We begin with the raw amino-acid sequence, 233 residues long: Putative N-acetylmannosamine-6-phosphate 2-epimerase (233 aa).

It belongs to the NanE family.

It carries out the reaction an N-acyl-D-glucosamine 6-phosphate = an N-acyl-D-mannosamine 6-phosphate. Its pathway is amino-sugar metabolism; N-acetylneuraminate degradation; D-fructose 6-phosphate from N-acetylneuraminate: step 3/5. Functionally, converts N-acetylmannosamine-6-phosphate (ManNAc-6-P) to N-acetylglucosamine-6-phosphate (GlcNAc-6-P). The polypeptide is Putative N-acetylmannosamine-6-phosphate 2-epimerase (Yersinia pestis bv. Antiqua (strain Antiqua)).